The chain runs to 304 residues: Aspartate carbamoyltransferase catalytic subunit (304 aa).

Positions 49 and 50 each coordinate carbamoyl phosphate. K77 serves as a coordination point for L-aspartate. Positions 99, 127, and 130 each coordinate carbamoyl phosphate. The L-aspartate site is built by R160 and R211. Carbamoyl phosphate contacts are provided by A250 and P251. S303 carries the post-translational modification Phosphoserine.

This sequence belongs to the aspartate/ornithine carbamoyltransferase superfamily. ATCase family. Heterododecamer (2C3:3R2) of six catalytic PyrB chains organized as two trimers (C3), and six regulatory PyrI chains organized as three dimers (R2).

The catalysed reaction is carbamoyl phosphate + L-aspartate = N-carbamoyl-L-aspartate + phosphate + H(+). It participates in pyrimidine metabolism; UMP biosynthesis via de novo pathway; (S)-dihydroorotate from bicarbonate: step 2/3. Its function is as follows. Catalyzes the condensation of carbamoyl phosphate and aspartate to form carbamoyl aspartate and inorganic phosphate, the committed step in the de novo pyrimidine nucleotide biosynthesis pathway. The sequence is that of Aspartate carbamoyltransferase catalytic subunit from Bacillus subtilis (strain 168).